The sequence spans 219 residues: 7-cyano-7-deazaguanine synthase (219 aa).

Position 10-20 (10-20 (FSGGQDSTTCL)) interacts with ATP. Residues cysteine 188, cysteine 197, cysteine 200, and cysteine 203 each coordinate Zn(2+).

Belongs to the QueC family. The cofactor is Zn(2+).

It carries out the reaction 7-carboxy-7-deazaguanine + NH4(+) + ATP = 7-cyano-7-deazaguanine + ADP + phosphate + H2O + H(+). It functions in the pathway purine metabolism; 7-cyano-7-deazaguanine biosynthesis. Its function is as follows. Catalyzes the ATP-dependent conversion of 7-carboxy-7-deazaguanine (CDG) to 7-cyano-7-deazaguanine (preQ(0)). The sequence is that of 7-cyano-7-deazaguanine synthase from Bacteroides fragilis (strain ATCC 25285 / DSM 2151 / CCUG 4856 / JCM 11019 / LMG 10263 / NCTC 9343 / Onslow / VPI 2553 / EN-2).